A 702-amino-acid chain; its full sequence is Ribosomal RNA large subunit methyltransferase K/L (702 aa).

Positions 43-154 constitute a THUMP domain; sequence LVYQSLMWSR…KETASIALDL (112 aa).

It belongs to the methyltransferase superfamily. RlmKL family.

It is found in the cytoplasm. It carries out the reaction guanosine(2445) in 23S rRNA + S-adenosyl-L-methionine = N(2)-methylguanosine(2445) in 23S rRNA + S-adenosyl-L-homocysteine + H(+). The enzyme catalyses guanosine(2069) in 23S rRNA + S-adenosyl-L-methionine = N(2)-methylguanosine(2069) in 23S rRNA + S-adenosyl-L-homocysteine + H(+). Specifically methylates the guanine in position 2445 (m2G2445) and the guanine in position 2069 (m7G2069) of 23S rRNA. This chain is Ribosomal RNA large subunit methyltransferase K/L, found in Shigella sonnei (strain Ss046).